A 93-amino-acid polypeptide reads, in one-letter code: Putative hemolysin E-like protein (93 aa).

The protein belongs to the hemolysin E family.

This Escherichia coli O6:H1 (strain CFT073 / ATCC 700928 / UPEC) protein is Putative hemolysin E-like protein.